Here is a 578-residue protein sequence, read N- to C-terminus: Frizzled and smoothened-like protein Q (578 aa).

An N-terminal signal peptide occupies residues 1–23; the sequence is MKNSFLINILIIYYLFIILFVNS. Over 24-233 the chain is Extracellular; the sequence is QDLKLGGSCE…GKTKILDRTN (210 aa). The FZ domain maps to 27 to 157; that stretch reads KLGGSCELID…GAPMFPINST (131 aa). Disulfide bonds link Cys32/Cys95, Cys41/Cys88, Cys79/Cys128, and Cys121/Cys141. Asn46, Asn64, Asn99, and Asn104 each carry an N-linked (GlcNAc...) asparagine glycan. Residues Asn144, Asn155, Asn181, and Asn233 are each glycosylated (N-linked (GlcNAc...) asparagine). A helical transmembrane segment spans residues 234 to 254; that stretch reads YTLTSISFITCIFMILTFGVL. Residues 255 to 261 lie on the Cytoplasmic side of the membrane; that stretch reads PNKITHR. The chain crosses the membrane as a helical span at residues 262–282; sequence MESILSFACGGCITALSLFIQ. Topologically, residues 283–305 are extracellular; the sequence is SRQDNFNCSSDPGRFKSQSDYLC. A glycan (N-linked (GlcNAc...) asparagine) is linked at Asn289. A helical membrane pass occupies residues 306–326; sequence LLTGLIFQFGAITSIFWSPMI. The Cytoplasmic portion of the chain corresponds to 327–341; it reads AYDFYITSTLGKIRK. A helical membrane pass occupies residues 342 to 362; the sequence is FGLYRIVLWSFIFVLTALPAF. Topologically, residues 363–388 are extracellular; that stretch reads GGKYSATVATNCWINSDDGSAWQYVS. The chain crosses the membrane as a helical span at residues 389-409; it reads FYIPSWCAMGLICLFSILSVI. Residues 410-422 are Cytoplasmic-facing; it reads NVSKMYIQTPNNR. A helical membrane pass occupies residues 423–443; the sequence is ILFFNIKILITLLLFLFVLTF. At 444–490 the chain is on the extracellular side; it reads ASSLKFYMEERMDTYFDAIAVWVECIGKGDPSQCELHAPGYDLKALN. A helical transmembrane segment spans residues 491–511; sequence IVVIGILGFTVFIGYGLDPIV. The Cytoplasmic segment spans residues 512-578; that stretch reads IHIWMESKKF…LKSTEINQQP (67 aa). Positions 544-556 are enriched in low complexity; it reads NNNNNETASTSSG. The tract at residues 544–578 is disordered; the sequence is NNNNNETASTSSGNERKQTTVKMSNLKSTEINQQP. A compositionally biased stretch (polar residues) spans 563–578; sequence TVKMSNLKSTEINQQP.

This sequence belongs to the G-protein coupled receptor Fz/Smo family.

Its subcellular location is the membrane. This chain is Frizzled and smoothened-like protein Q (fslQ), found in Dictyostelium discoideum (Social amoeba).